Here is a 152-residue protein sequence, read N- to C-terminus: Protein-export protein SecB (152 aa).

Belongs to the SecB family. In terms of assembly, homotetramer, a dimer of dimers. One homotetramer interacts with 1 SecA dimer.

It localises to the cytoplasm. Functionally, one of the proteins required for the normal export of preproteins out of the cell cytoplasm. It is a molecular chaperone that binds to a subset of precursor proteins, maintaining them in a translocation-competent state. It also specifically binds to its receptor SecA. The sequence is that of Protein-export protein SecB from Rickettsia bellii (strain RML369-C).